Reading from the N-terminus, the 238-residue chain is MRPHHRLPDQMRELHIERAVNCHAEGSALITLGRTQVLCTASIEERVPPFLRGQNQGWVTAEYGMLPRATHERSTREAARGKQQGRTQEIQRLIGRSLRAVVDLSALGERSITLDCDVLQADGGTRTAAISGGFIALADAIRVLMQQGRLKANPLRGQLAAVSVGFYQGEALLDLEYCEDSAAETDMNIVMNDAGALIEIQGTAEGRAFSRQEMNALLDLAEKGISEIMAEQRRVLGL.

Residues Arg86 and 124–126 contribute to the phosphate site; that span reads GTR.

Belongs to the RNase PH family. Homohexameric ring arranged as a trimer of dimers.

It carries out the reaction tRNA(n+1) + phosphate = tRNA(n) + a ribonucleoside 5'-diphosphate. Its function is as follows. Phosphorolytic 3'-5' exoribonuclease that plays an important role in tRNA 3'-end maturation. Removes nucleotide residues following the 3'-CCA terminus of tRNAs; can also add nucleotides to the ends of RNA molecules by using nucleoside diphosphates as substrates, but this may not be physiologically important. Probably plays a role in initiation of 16S rRNA degradation (leading to ribosome degradation) during starvation. The sequence is that of Ribonuclease PH from Dichelobacter nodosus (strain VCS1703A).